Reading from the N-terminus, the 317-residue chain is Putative 2-hydroxyacid dehydrogenase SERP1888 (317 aa).

NAD(+)-binding positions include 155-156 (EI), 234-236 (AGR), and D260. R236 is an active-site residue. E265 is a catalytic residue. Residue H283 is the Proton donor of the active site. Residue 283–286 (HIGN) coordinates NAD(+).

It belongs to the D-isomer specific 2-hydroxyacid dehydrogenase family.

This Staphylococcus epidermidis (strain ATCC 35984 / DSM 28319 / BCRC 17069 / CCUG 31568 / BM 3577 / RP62A) protein is Putative 2-hydroxyacid dehydrogenase SERP1888.